Consider the following 136-residue polypeptide: MSVGRRRGRILAFQALVAWDVGGAVLDDLLNFSWQNEDSIKDPNGYLFPKMMVLGTIENITEIDKVIQENLDNWVIDRLNSVDKAILRLSVYSLIYQKDTPPPIVIDEAINLAKDFGTDDSYKFVNAVLDSIKNKS.

Belongs to the NusB family.

Its function is as follows. Involved in transcription antitermination. Required for transcription of ribosomal RNA (rRNA) genes. Binds specifically to the boxA antiterminator sequence of the ribosomal RNA (rrn) operons. The protein is Transcription antitermination protein NusB of Treponema denticola (strain ATCC 35405 / DSM 14222 / CIP 103919 / JCM 8153 / KCTC 15104).